The primary structure comprises 200 residues: Kunitz type trypsin inhibitor 111 (200 aa).

A signal peptide spans 1-24 (MSTISFTIFILANVWLLVVTTSIA). 3 disulfides stabilise this stretch: Cys62–Cys108, Cys160–Cys172, and Cys165–Cys168.

This sequence belongs to the protease inhibitor I3 (leguminous Kunitz-type inhibitor) family. Interacts with SCP1.

Its subcellular location is the secreted. The protein localises to the extracellular space. It localises to the apoplast. The chain is Kunitz type trypsin inhibitor 111 (KPI111) from Medicago truncatula (Barrel medic).